Here is a 158-residue protein sequence, read N- to C-terminus: uncharacterized protein (158 aa).

Disordered regions lie at residues M1–W86 and A138–F158. A compositionally biased stretch (low complexity) spans S7–A76.

This is an uncharacterized protein from Homo sapiens (Human).